The chain runs to 433 residues: Enolase (433 aa).

Gln-167 provides a ligand contact to (2R)-2-phosphoglycerate. Catalysis depends on Glu-209, which acts as the Proton donor. Residues Asp-246, Glu-291, and Asp-318 each coordinate Mg(2+). Residues Lys-343, Arg-372, Ser-373, and Lys-394 each coordinate (2R)-2-phosphoglycerate. The Proton acceptor role is filled by Lys-343.

This sequence belongs to the enolase family. Component of the RNA degradosome, a multiprotein complex involved in RNA processing and mRNA degradation. Requires Mg(2+) as cofactor.

It is found in the cytoplasm. The protein localises to the secreted. It localises to the cell surface. It carries out the reaction (2R)-2-phosphoglycerate = phosphoenolpyruvate + H2O. Its pathway is carbohydrate degradation; glycolysis; pyruvate from D-glyceraldehyde 3-phosphate: step 4/5. Catalyzes the reversible conversion of 2-phosphoglycerate (2-PG) into phosphoenolpyruvate (PEP). It is essential for the degradation of carbohydrates via glycolysis. This Sodalis glossinidius (strain morsitans) protein is Enolase.